A 402-amino-acid chain; its full sequence is GTPase HflX (402 aa).

Residues 181–350 (DTVGLIGYTN…MIIEHLNLSI (170 aa)) enclose the Hflx-type G domain. GTP is bound by residues 187-194 (GYTNAGKT), 212-216 (FTTLT), 233-236 (DTVG), 300-303 (NKVD), and 328-330 (SAK). Mg(2+)-binding residues include T194 and T214.

This sequence belongs to the TRAFAC class OBG-HflX-like GTPase superfamily. HflX GTPase family. As to quaternary structure, monomer. Associates with the 50S ribosomal subunit. It depends on Mg(2+) as a cofactor.

It is found in the cytoplasm. Functionally, GTPase that associates with the 50S ribosomal subunit and may have a role during protein synthesis or ribosome biogenesis. This Methanocaldococcus jannaschii (strain ATCC 43067 / DSM 2661 / JAL-1 / JCM 10045 / NBRC 100440) (Methanococcus jannaschii) protein is GTPase HflX.